The following is a 211-amino-acid chain: Shikimate kinase (211 aa).

A disordered region spans residues 1–23 (MNASANLCAASDNDPQPGDQEAA). Residue 50–55 (GAGKTT) participates in ATP binding. Mg(2+) is bound at residue Thr54. Substrate contacts are provided by Asp72, Arg96, and Gly118. Arg156 provides a ligand contact to ATP. Residue Arg175 participates in substrate binding.

Belongs to the shikimate kinase family. Monomer. Mg(2+) serves as cofactor.

It localises to the cytoplasm. The enzyme catalyses shikimate + ATP = 3-phosphoshikimate + ADP + H(+). It functions in the pathway metabolic intermediate biosynthesis; chorismate biosynthesis; chorismate from D-erythrose 4-phosphate and phosphoenolpyruvate: step 5/7. Its function is as follows. Catalyzes the specific phosphorylation of the 3-hydroxyl group of shikimic acid using ATP as a cosubstrate. The polypeptide is Shikimate kinase (Bordetella bronchiseptica (strain ATCC BAA-588 / NCTC 13252 / RB50) (Alcaligenes bronchisepticus)).